Consider the following 89-residue polypeptide: MRIEFEVTHPFHPWRGQRFVLSTRKQNWGEDRVMFYDADGRLRSLLASWTDVAAPDVFIQIAAGRSFVRPDDLATLAALIEQIERSHGG.

It to Rhizobium NGR234A y4oN.

This is an uncharacterized protein from Sinorhizobium fredii (strain NBRC 101917 / NGR234).